The chain runs to 209 residues: Uracil phosphoribosyltransferase (209 aa).

Residues Arg-79, Arg-104, and 131 to 139 each bind 5-phospho-alpha-D-ribose 1-diphosphate; that span reads DPMLATGGS. Uracil is bound by residues Ile-194 and 199–201; that span reads GDA. A 5-phospho-alpha-D-ribose 1-diphosphate-binding site is contributed by Asp-200.

Belongs to the UPRTase family. The cofactor is Mg(2+).

It carries out the reaction UMP + diphosphate = 5-phospho-alpha-D-ribose 1-diphosphate + uracil. Its pathway is pyrimidine metabolism; UMP biosynthesis via salvage pathway; UMP from uracil: step 1/1. With respect to regulation, allosterically activated by GTP. In terms of biological role, catalyzes the conversion of uracil and 5-phospho-alpha-D-ribose 1-diphosphate (PRPP) to UMP and diphosphate. This Bacillus pumilus (strain SAFR-032) protein is Uracil phosphoribosyltransferase.